The primary structure comprises 294 residues: Bifunctional protein FolD (294 aa).

NADP(+)-binding positions include 176–178 (GAS), S201, and I242.

The protein belongs to the tetrahydrofolate dehydrogenase/cyclohydrolase family. In terms of assembly, homodimer.

It catalyses the reaction (6R)-5,10-methylene-5,6,7,8-tetrahydrofolate + NADP(+) = (6R)-5,10-methenyltetrahydrofolate + NADPH. It carries out the reaction (6R)-5,10-methenyltetrahydrofolate + H2O = (6R)-10-formyltetrahydrofolate + H(+). Its pathway is one-carbon metabolism; tetrahydrofolate interconversion. In terms of biological role, catalyzes the oxidation of 5,10-methylenetetrahydrofolate to 5,10-methenyltetrahydrofolate and then the hydrolysis of 5,10-methenyltetrahydrofolate to 10-formyltetrahydrofolate. This Bordetella petrii (strain ATCC BAA-461 / DSM 12804 / CCUG 43448) protein is Bifunctional protein FolD.